Consider the following 296-residue polypeptide: Ribosomal RNA small subunit methyltransferase A (296 aa).

Positions 32, 34, 59, 80, 105, and 130 each coordinate S-adenosyl-L-methionine.

It belongs to the class I-like SAM-binding methyltransferase superfamily. rRNA adenine N(6)-methyltransferase family. RsmA subfamily.

Its subcellular location is the cytoplasm. It carries out the reaction adenosine(1518)/adenosine(1519) in 16S rRNA + 4 S-adenosyl-L-methionine = N(6)-dimethyladenosine(1518)/N(6)-dimethyladenosine(1519) in 16S rRNA + 4 S-adenosyl-L-homocysteine + 4 H(+). In terms of biological role, specifically dimethylates two adjacent adenosines (A1518 and A1519) in the loop of a conserved hairpin near the 3'-end of 16S rRNA in the 30S particle. May play a critical role in biogenesis of 30S subunits. This is Ribosomal RNA small subunit methyltransferase A from Ligilactobacillus salivarius (strain UCC118) (Lactobacillus salivarius).